We begin with the raw amino-acid sequence, 948 residues long: Zinc finger CCCH domain-containing protein 18 (948 aa).

The residue at position 1 (Met-1) is an N-acetylmethionine. Residues 1–219 form a disordered region; it reads MDVAESPELD…SDRKVRPRPT (219 aa). Phosphoserine is present on Ser-6. Positions 15–25 are enriched in acidic residues; the sequence is EDEEQPALSDD. Residues Ser-33, Ser-45, Ser-58, Ser-64, Ser-71, Ser-75, Ser-80, and Ser-92 each carry the phosphoserine modification. Over residues 70–86 the composition is skewed to basic and acidic residues; the sequence is ASEPKSQDQDSEAHELS. Positions 95-105 are enriched in acidic residues; it reads EEGDDVEEDGT. Thr-105 carries the phosphothreonine modification. Phosphoserine occurs at positions 106 and 114. The segment covering 106 to 120 has biased composition (basic and acidic residues); it reads SDLRDEASSVTRELD. 2 stretches are compositionally biased toward acidic residues: residues 121–132 and 139–154; these read EHELDYDEEVPE and QEEEAEKAGAEEEEEK. At Ser-169 the chain carries Phosphoserine. Positions 177–186 are enriched in basic and acidic residues; it reads EAAKEKKKED. Residues 187 to 203 show a composition bias toward acidic residues; that stretch reads DDGEIDDGEIDDDDLEE. Residues 204–213 are compositionally biased toward basic and acidic residues; the sequence is GEVKDPSDRK. The C3H1-type zinc finger occupies 215–241; sequence RPRPTCRFFMKGNCTWGMSCRFIHPGV. Residue Gly-245 is modified to Omega-N-methylarginine. Disordered stretches follow at residues 272–296 and 388–922; these read ANPWGGPVVDEILPPPPPEPPTESA and YTEA…TLSR. The segment covering 392-480 has biased composition (basic and acidic residues); sequence EPYHNYRERE…DREKDKEKPK (89 aa). Residues 395–460 adopt a coiled-coil conformation; that stretch reads HNYRERERER…RERAKRDEKD (66 aa). Ser-483 carries the phosphoserine modification. A Glycyl lysine isopeptide (Lys-Gly) (interchain with G-Cter in SUMO2) cross-link involves residue Lys-506. Positions 506–516 are enriched in basic and acidic residues; that stretch reads KRADEWKDPWR. Residues Ser-528, Ser-530, and Ser-532 each carry the phosphoserine modification. Low complexity predominate over residues 541–602; sequence SASSASASNS…SRSRSFSSSP (62 aa). Residues 603 to 612 are compositionally biased toward pro residues; sequence SPSPTPSPHR. Residues Lys-618 and Lys-657 each participate in a glycyl lysine isopeptide (Lys-Gly) (interchain with G-Cter in SUMO2) cross-link. Positions 657–666 are enriched in basic and acidic residues; the sequence is KPGDLREARR. Composition is skewed to low complexity over residues 688-721 and 732-746; these read GSSYSGSSSRSRSLSVSSVSSVSSATSSSSSVHS and ASPVSSASSRSPTPA. Positions 756 to 770 are enriched in basic and acidic residues; it reads KKEDGVREEKRRRDP. A compositionally biased stretch (low complexity) spans 774–804; the sequence is PPKSSKAPAGGKASQQAAAPQPAVPGQPQQG. The residue at position 810 (Lys-810) is an N6-acetyllysine. A Glycyl lysine isopeptide (Lys-Gly) (interchain with G-Cter in SUMO2) cross-link involves residue Lys-813. Residues 820–837 are compositionally biased toward basic and acidic residues; it reads AADKGSRKRYEPSDKDRQ. Phosphoserine occurs at positions 838, 847, 863, 888, and 891. Residues 888 to 898 show a composition bias toward polar residues; that stretch reads SPQSKGSSKVT. Residues 902-919 show a composition bias toward low complexity; it reads GKATDTATAGTKSGKAST. Lys-903 participates in a covalent cross-link: Glycyl lysine isopeptide (Lys-Gly) (interchain with G-Cter in SUMO2). A coiled-coil region spans residues 916–945; that stretch reads KASTLSRREELLKQLKAVEDAIARKRAKIP.

In terms of assembly, interacts with ZFC3H1 in a RNase-insensitive manner.

Its subcellular location is the nucleus. The sequence is that of Zinc finger CCCH domain-containing protein 18 (Zc3h18) from Mus musculus (Mouse).